The primary structure comprises 309 residues: Cytochrome c biogenesis protein CcsA (309 aa).

8 helical membrane-spanning segments follow: residues 18–38, 48–68, 73–93, 102–122, 148–168, 216–236, 250–267, and 279–299; these read LGLLVFYFLLINLPISLGAVF, LITILVNLLITLQLLFRWSIS, ISNLYESLYFLTWGITLGQLL, IIPSIAIPIELLTVAFACFVL, VMLSYAALIIGSLLSMSVLFI, SILVGFVLLTLGLISGAVWAN, TWAFISWLFYAAYLHMRI, and LASTGFLVVLVCYLGVNFLGI.

Belongs to the CcmF/CycK/Ccl1/NrfE/CcsA family. As to quaternary structure, may interact with ccs1.

The protein resides in the cellular thylakoid membrane. Required during biogenesis of c-type cytochromes (cytochrome c6 and cytochrome f) at the step of heme attachment. This is Cytochrome c biogenesis protein CcsA from Prochlorococcus marinus (strain AS9601).